Reading from the N-terminus, the 375-residue chain is Proclotting enzyme (375 aa).

The N-terminal stretch at 1-21 is a signal peptide; that stretch reads MLVNNVFSLLCFPLLMSVVRC. Positions 22-27 are excised as a propeptide; that stretch reads STLSRQ. Residue Q30 is modified to Pyrrolidone carboxylic acid. In terms of domain architecture, Clip spans 39–84; that stretch reads LCSNRFTEEGTCKNVLDCRILLQKNDYNLLKESICGFEGITPKVCC. Intrachain disulfides connect C40–C83, C50–C73, and C56–C84. A disordered region spans residues 90–113; the sequence is VISSTQAPPETTTTERPPKQIPPN. Disulfide bonds link C118–C248, C157–C173, C295–C311, and C322–C351. N-linked (GlcNAc...) asparagine glycosylation is present at N122. Positions 128–375 constitute a Peptidase S1 domain; sequence IIGGREAPIG…FLDWIAEHMV (248 aa). The active-site Charge relay system is the H172. Residues E194, N196, S199, and D202 each contribute to the Ca(2+) site. D228 acts as the Charge relay system in catalysis. N-linked (GlcNAc...) asparagine glycans are attached at residues N235 and N304. Residue S326 is the Charge relay system of the active site.

It belongs to the peptidase S1 family. CLIP subfamily. In terms of assembly, in the active form, heterodimer of a light chain and a heavy chain; disulfide-linked. Forms a covalent heterodimer with intracellular coagulation inhibitor 2/LICI-2. Proteolytically cleaved into its mature active form by serine protease factor B. Cleavage produces a 25 kDa light chain containing the CLIP domain and a catalytic 31 kDa heavy chain which remain covalently associated through an interchain disulfide bond. Proteolytically cleaved by clotting factor G subunit beta. In terms of processing, contains six O-linked carbohydrate chains in the N-terminal light chain. Expressed in hemocytes (at protein level).

Its subcellular location is the cytoplasmic vesicle. It is found in the secretory vesicle. The protein resides in the secreted. It catalyses the reaction Selective cleavage of 18-Arg-|- and 47-Arg-|- bonds in coagulogen to form coagulin and fragments.. Inhibited by intracellular coagulation inhibitor 2/LICI-2 and to a lesser extent by intracellular coagulation inhibitor 3/LICI-3. Functionally, this enzyme is closely associated with an endotoxin-sensitive hemolymph coagulation system in limulus. Its active form catalyzes the conversion of coagulogen to insoluble coagulin gel. The polypeptide is Proclotting enzyme (Tachypleus tridentatus (Japanese horseshoe crab)).